The following is a 185-amino-acid chain: Cell wall protein phiA (185 aa).

The N-terminal stretch at 1–18 (MQIKSFVLAASAAATASA) is a signal peptide. An N-linked (GlcNAc...) asparagine glycan is attached at asparagine 60.

It belongs to the phiA family.

The protein resides in the secreted. Its subcellular location is the cell wall. Cell wall protein involved in development of asexual structures such as phialide and conidium development, and thus required for spore formation. Plays a role as a general stress protectant produced by the fungus in competition with antagonistic bacteria. The sequence is that of Cell wall protein phiA from Aspergillus fumigatus (strain CBS 144.89 / FGSC A1163 / CEA10) (Neosartorya fumigata).